Here is a 255-residue protein sequence, read N- to C-terminus: Hydroxyacylglutathione hydrolase (255 aa).

Residues histidine 53, histidine 55, aspartate 57, histidine 58, histidine 110, aspartate 127, and histidine 165 each contribute to the Zn(2+) site.

The protein belongs to the metallo-beta-lactamase superfamily. Glyoxalase II family. In terms of assembly, monomer. Requires Zn(2+) as cofactor.

The enzyme catalyses an S-(2-hydroxyacyl)glutathione + H2O = a 2-hydroxy carboxylate + glutathione + H(+). The protein operates within secondary metabolite metabolism; methylglyoxal degradation; (R)-lactate from methylglyoxal: step 2/2. Its function is as follows. Thiolesterase that catalyzes the hydrolysis of S-D-lactoyl-glutathione to form glutathione and D-lactic acid. The sequence is that of Hydroxyacylglutathione hydrolase from Xanthomonas axonopodis pv. citri (strain 306).